Here is a 132-residue protein sequence, read N- to C-terminus: UPF0299 membrane protein CKO_00648 (132 aa).

Helical transmembrane passes span Ile7–Phe27, Leu31–Ala51, Gly63–Met83, and Phe93–Trp113.

It belongs to the UPF0299 family.

The protein resides in the cell inner membrane. In Citrobacter koseri (strain ATCC BAA-895 / CDC 4225-83 / SGSC4696), this protein is UPF0299 membrane protein CKO_00648.